Reading from the N-terminus, the 665-residue chain is Prelamin-A/C (665 aa).

M1 carries the post-translational modification N-acetylmethionine. The disordered stretch occupies residues M1–R25. The head stretch occupies residues M1–E33. Residues M1 to A130 form an interaction with MLIP region. Position 3 is a phosphothreonine (T3). At S5 the chain carries Phosphoserine. T10 carries the post-translational modification Phosphothreonine. Phosphoserine is present on residues S12 and S18. T19 is subject to Phosphothreonine. S22 carries the post-translational modification Phosphoserine. One can recognise an IF rod domain in the interval E31–L387. K32 bears the N6-acetyllysine; alternate mark. The residue at position 32 (K32) is an N6-succinyllysine; alternate. K32 is covalently cross-linked (Glycyl lysine isopeptide (Lys-Gly) (interchain with G-Cter in SUMO2); alternate). Residues D34–V70 are coil 1A. Residues S51, S66, and S71 each carry the phosphoserine modification. The interval S71–A80 is linker 1. 2 positions are modified to N6-acetyllysine: K78 and K97. The coil 1B stretch occupies residues Y81–T218. A Glycyl lysine isopeptide (Lys-Gly) (interchain with G-Cter in SUMO2) cross-link involves residue K97. S107 carries the phosphoserine modification. N6-acetyllysine occurs at positions 108, 114, 123, 135, 144, and 155. K171 carries the post-translational modification N6-acetyllysine; alternate. K171 is modified (N6-succinyllysine; alternate). Residue K171 forms a Glycyl lysine isopeptide (Lys-Gly) (interchain with G-Cter in SUMO2); alternate linkage. N6-acetyllysine occurs at positions 180, 201, and 208. A Glycyl lysine isopeptide (Lys-Gly) (interchain with G-Cter in SUMO2); alternate cross-link involves residue K201. K201 is covalently cross-linked (Glycyl lysine isopeptide (Lys-Gly) (interchain with G-Cter in SUMO); alternate). Residue K208 forms a Glycyl lysine isopeptide (Lys-Gly) (interchain with G-Cter in SUMO2) linkage. Residue S212 is modified to Phosphoserine. Glycyl lysine isopeptide (Lys-Gly) (interchain with G-Cter in SUMO2) cross-links involve residues K219 and K233. A linker 2 region spans residues K219–A242. N6-acetyllysine is present on residues K233, K260, K265, and K270. Positions D243 to E383 are coil 2. K260 participates in a covalent cross-link: Glycyl lysine isopeptide (Lys-Gly) (interchain with G-Cter in SUMO2); alternate. K270 is covalently cross-linked (Glycyl lysine isopeptide (Lys-Gly) (interchain with G-Cter in SUMO2); alternate). S277, S282, S301, and S307 each carry phosphoserine. K311 participates in a covalent cross-link: Glycyl lysine isopeptide (Lys-Gly) (interchain with G-Cter in SUMO2); alternate. 3 positions are modified to N6-acetyllysine: K311, K316, and K341. Residues K366 and K378 each participate in a glycyl lysine isopeptide (Lys-Gly) (interchain with G-Cter in SUMO2) cross-link. Residues E384–V442 form a disordered region. The segment at E384 to M665 is tail. Phosphoserine is present on residues S390, S392, S395, S398, S403, S404, S406, S407, S409, and S414. Phosphoserine; by CDK1 is present on S392. The segment covering S395–S409 has biased composition (low complexity). T416 is subject to Phosphothreonine. Residues K417 and K420 each carry the N6-acetyllysine modification. Glycyl lysine isopeptide (Lys-Gly) (interchain with G-Cter in SUMO2) cross-links involve residues K417 and K420. The Nuclear localization signal motif lies at K417–E422. A phosphoserine mark is found at S423, S426, S429, and S431. In terms of domain architecture, LTD spans S428–R545. K450 participates in a covalent cross-link: Glycyl lysine isopeptide (Lys-Gly) (interchain with G-Cter in SUMO2); alternate. N6-acetyllysine occurs at positions 450 and 457. Residues S458, E460, and S463 each carry the phosphoserine modification. K486 bears the N6-acetyllysine mark. A Glycyl lysine isopeptide (Lys-Gly) (interchain with G-Cter in SUMO2) cross-link involves residue K486. A Phosphothreonine modification is found at T496. Phosphoserine is present on S500. T505 and T510 each carry phosphothreonine. Phosphoserine is present on residues S533 and S546. The residue at position 548 (T548) is a Phosphothreonine. The tract at residues N553 to D577 is disordered. S570, C572, and S573 each carry phosphoserine. A Glycyl lysine isopeptide (Lys-Gly) (interchain with G-Cter in SUMO2); alternate cross-link involves residue K599. A Glycyl lysine isopeptide (Lys-Gly) (interchain with G-Cter in SUMO1); alternate cross-link involves residue K599. Residues S613, S614, S617, and S620 each carry the phosphoserine modification. O-linked (GlcNAc) serine glycosylation is found at S626 and S629. S629, S633, S637, and S653 each carry phosphoserine. Residues L648–C662 constitute a propeptide, removed in Lamin-A/C form. C662 bears the Cysteine methyl ester mark. The S-farnesyl cysteine moiety is linked to residue C662. A propeptide spans S663 to M665 (removed in Prelamin-A/C form and in Lamin-A/C form).

It belongs to the intermediate filament family. Homodimer of lamin A and lamin C. Lamin dimers then assemble into dimeric head-to-tail polymers. Ultimately, two head-to-tail polymers assemble laterally into a protofilament with a uniformly shaped rod of 3.5 nm in diameter. Interacts with lamin-associated polypeptides IA, IB and TMPO-alpha, RB1 and with emerin. Proteolytically processed isoform A interacts with NARF. Interacts with SREBF1, SREBF2, SUN1, SUN2 and TMEM43. Interacts with TMEM201. Prelamin-A/C interacts with EMD. Interacts with DMPK; may regulate nuclear envelope stability. Interacts with MLIP. Interacts with SUV39H1; the interaction increases stability of SUV39H1. Interacts with ITSN1 isoform 2. Interacts with IFFO1; the interaction forms an interior nucleoskeleton and the recruitment to DNA double-strand breaks. As to quaternary structure, interacts with EMD. In terms of assembly, interacts (via C-terminus) with LEMD2 (via N-terminus) (in vitro). Post-translationally, proteolytic cleavage of the C-terminal of 18 residues of prelamin-A/C results in the production of lamin-A/C. The prelamin-A/C maturation pathway includes farnesylation of CAAX motif by protein farnesyltransferase (FNTA and FNTB), removal of the last three amino acids (-AAX) by RCE1/FACE2 and/or ZMPSTE24, methylation of the C-terminal cysteine by ICMT and endoproteolytic removal of the last 15 C-terminal amino acids by ZMPSTE24. Proteolytic cleavage requires prior farnesylation and methylation, and absence of these blocks cleavage. Farnesylation of prelamin-A/C facilitates nuclear envelope targeting. In terms of processing, phosphorylation plays a key role in lamin organization, subcellular localization and nuclear envelope disintegration. Phosphorylation by CDK1 at Ser-22 and Ser-392 at the onset of mitosis drives lamin disassembly and nuclear envelope breakdown. Phosphorylation at Ser-22 and Ser-392 during interphase promotes localization to the nucleoplasm and regulates lamina assembly. Phosphorylation at Ser-22, Ser-392 and Ser-629 during interphase causes redistribution between the nucleus and the cytoplasm. Phosphorylation at Ser-22 by CDK1 regulates matrix stiffness. Phosphorylation status of Ser-22 determines its localization between double-strand break (DSB) sites and the nuclear matrix. Phosphorylated by ATR at Ser-282 in response to DNA damage, leading to lamin disassembly and nuclear envelope rupture. Phosphorylation also regulates stability in micronuclei arising from genome instability: phosphorylation at Ser-395 by ATR in response to genome instability and double-stranded DNA breaks primes LMNA for subsequent phosphorylation at Ser-392 by CDK1 and micronuclei envelope rupture. The rupture of micronuclear envelope triggers the cGAS-STING pathway thereby activating the type I interferon response and innate immunity. Post-translationally, isoform C is phosphorylated on Ser-392, Ser-407 and Ser-409 at interphase. Acetylation by KAT8 is required for nuclear architecture. In terms of processing, sumoylation is necessary for the localization to the nuclear envelope. Post-translationally, the N-terminus is blocked. As to expression, expressed in liver and in bone marrow (at protein level). Expressed in cardiomyocytes. In terms of tissue distribution, specifically expressed in germ cells.

It localises to the nucleus lamina. Its subcellular location is the nucleus envelope. It is found in the nucleus. The protein resides in the nucleoplasm. The protein localises to the nucleus matrix. Its function is as follows. Lamins are intermediate filament proteins that assemble into a filamentous meshwork, and which constitute the major components of the nuclear lamina, a fibrous layer on the nucleoplasmic side of the inner nuclear membrane. Lamins provide a framework for the nuclear envelope, bridging the nuclear envelope and chromatin, thereby playing an important role in nuclear assembly, chromatin organization, nuclear membrane and telomere dynamics. Lamin A and C also regulate matrix stiffness by conferring nuclear mechanical properties. The structural integrity of the lamina is strictly controlled by the cell cycle, as seen by the disintegration and formation of the nuclear envelope in prophase and telophase, respectively. Lamin A and C are present in equal amounts in the lamina of mammals. Also invoved in DNA repair: recruited by DNA repair proteins XRCC4 and IFFO1 to the DNA double-strand breaks (DSBs) to prevent chromosome translocation by immobilizing broken DNA ends. Required for normal development of peripheral nervous system and skeletal muscle and for muscle satellite cell proliferation. Required for osteoblastogenesis and bone formation. Also prevents fat infiltration of muscle and bone marrow, helping to maintain the volume and strength of skeletal muscle and bone. Required for cardiac homeostasis. Functionally, prelamin-A/C can accelerate smooth muscle cell senescence. It acts to disrupt mitosis and induce DNA damage in vascular smooth muscle cells (VSMCs), leading to mitotic failure, genomic instability, and premature senescence. Isoform C2 may have a role in determining the organization of nuclear and chromosomal structures during spermatogenesis. The chain is Prelamin-A/C (Lmna) from Mus musculus (Mouse).